The sequence spans 301 residues: Putative S-adenosyl-L-methionine-dependent methyltransferase MT0851 (301 aa).

Residues D127 and 156–157 each bind S-adenosyl-L-methionine; that span reads DL.

This sequence belongs to the UPF0677 family.

Its function is as follows. Exhibits S-adenosyl-L-methionine-dependent methyltransferase activity. The protein is Putative S-adenosyl-L-methionine-dependent methyltransferase MT0851 of Mycobacterium tuberculosis (strain CDC 1551 / Oshkosh).